Reading from the N-terminus, the 89-residue chain is LYR motif-containing protein 4 (89 aa).

Belongs to the complex I LYR family.

The protein resides in the mitochondrion. Its subcellular location is the nucleus. The protein operates within cofactor biosynthesis; iron-sulfur cluster biosynthesis. Its function is as follows. Required for nuclear and mitochondrial iron-sulfur protein biosynthesis. In Danio rerio (Zebrafish), this protein is LYR motif-containing protein 4 (lyrm4).